Reading from the N-terminus, the 196-residue chain is ATP-dependent Clp protease proteolytic subunit (196 aa).

Ser101 serves as the catalytic Nucleophile. The active site involves His126.

The protein belongs to the peptidase S14 family. Component of the chloroplastic Clp protease core complex.

The protein localises to the plastid. It localises to the chloroplast stroma. The catalysed reaction is Hydrolysis of proteins to small peptides in the presence of ATP and magnesium. alpha-casein is the usual test substrate. In the absence of ATP, only oligopeptides shorter than five residues are hydrolyzed (such as succinyl-Leu-Tyr-|-NHMec, and Leu-Tyr-Leu-|-Tyr-Trp, in which cleavage of the -Tyr-|-Leu- and -Tyr-|-Trp bonds also occurs).. Cleaves peptides in various proteins in a process that requires ATP hydrolysis. Has a chymotrypsin-like activity. Plays a major role in the degradation of misfolded proteins. The polypeptide is ATP-dependent Clp protease proteolytic subunit (Lotus japonicus (Lotus corniculatus var. japonicus)).